A 728-amino-acid chain; its full sequence is 1,4-alpha-glucan branching enzyme GlgB (728 aa).

Asp-405 (nucleophile) is an active-site residue. The active-site Proton donor is Glu-458.

This sequence belongs to the glycosyl hydrolase 13 family. GlgB subfamily. Monomer.

It catalyses the reaction Transfers a segment of a (1-&gt;4)-alpha-D-glucan chain to a primary hydroxy group in a similar glucan chain.. It functions in the pathway glycan biosynthesis; glycogen biosynthesis. In terms of biological role, catalyzes the formation of the alpha-1,6-glucosidic linkages in glycogen by scission of a 1,4-alpha-linked oligosaccharide from growing alpha-1,4-glucan chains and the subsequent attachment of the oligosaccharide to the alpha-1,6 position. This Escherichia coli O139:H28 (strain E24377A / ETEC) protein is 1,4-alpha-glucan branching enzyme GlgB.